Reading from the N-terminus, the 434-residue chain is Methylenetetrahydrofolate--tRNA-(uracil-5-)-methyltransferase TrmFO (434 aa).

9 to 14 (GAGLAG) provides a ligand contact to FAD.

The protein belongs to the MnmG family. TrmFO subfamily. It depends on FAD as a cofactor.

It localises to the cytoplasm. The enzyme catalyses uridine(54) in tRNA + (6R)-5,10-methylene-5,6,7,8-tetrahydrofolate + NADH + H(+) = 5-methyluridine(54) in tRNA + (6S)-5,6,7,8-tetrahydrofolate + NAD(+). It carries out the reaction uridine(54) in tRNA + (6R)-5,10-methylene-5,6,7,8-tetrahydrofolate + NADPH + H(+) = 5-methyluridine(54) in tRNA + (6S)-5,6,7,8-tetrahydrofolate + NADP(+). Catalyzes the folate-dependent formation of 5-methyl-uridine at position 54 (M-5-U54) in all tRNAs. The sequence is that of Methylenetetrahydrofolate--tRNA-(uracil-5-)-methyltransferase TrmFO from Listeria monocytogenes serovar 1/2a (strain ATCC BAA-679 / EGD-e).